We begin with the raw amino-acid sequence, 1459 residues long: ARF guanine-nucleotide exchange factor 2 (1459 aa).

Residues Ser-46 and Ser-284 each carry the phosphoserine modification. Residues 570-714 (FNEKPKKGIP…IIMLNTDLHN (145 aa)) enclose the SEC7 domain. The tract at residues 1412 to 1459 (EKGNGSSSHGSAHEQTPESNDVEIEATAPIDDNTDDDNKPKLSDVEKD) is disordered. Over residues 1447 to 1459 (DDNKPKLSDVEKD) the composition is skewed to basic and acidic residues.

As to quaternary structure, interacts (via SEC7 domain) with DRS2 (via C-terminus); the interaction is direct. Interacts with GMH1.

The protein localises to the cytoplasm. Its subcellular location is the cytosol. The protein resides in the membrane. It is found in the golgi apparatus membrane. Functionally, activates the ARF proteins by exchanging bound GDP for free GTP. Plays a role in maintaining mitochondrial morphology. Stimulates DRS2 flippase activity. The polypeptide is ARF guanine-nucleotide exchange factor 2 (GEA2) (Saccharomyces cerevisiae (strain ATCC 204508 / S288c) (Baker's yeast)).